Reading from the N-terminus, the 474-residue chain is Probable dipeptidase B (474 aa).

The active site involves Cys11.

Belongs to the peptidase C69 family.

It catalyses the reaction an L-aminoacyl-L-amino acid + H2O = 2 an L-alpha-amino acid. This chain is Probable dipeptidase B (pepDB), found in Lactococcus lactis subsp. lactis (strain IL1403) (Streptococcus lactis).